The sequence spans 154 residues: 6,7-dimethyl-8-ribityllumazine synthase (154 aa).

5-amino-6-(D-ribitylamino)uracil-binding positions include Phe-22, 56-58 (AFE), and 80-82 (AVI). 85–86 (ET) provides a ligand contact to (2S)-2-hydroxy-3-oxobutyl phosphate. Residue His-88 is the Proton donor of the active site. Phe-113 contributes to the 5-amino-6-(D-ribitylamino)uracil binding site. Arg-127 serves as a coordination point for (2S)-2-hydroxy-3-oxobutyl phosphate.

It belongs to the DMRL synthase family.

It catalyses the reaction (2S)-2-hydroxy-3-oxobutyl phosphate + 5-amino-6-(D-ribitylamino)uracil = 6,7-dimethyl-8-(1-D-ribityl)lumazine + phosphate + 2 H2O + H(+). It functions in the pathway cofactor biosynthesis; riboflavin biosynthesis; riboflavin from 2-hydroxy-3-oxobutyl phosphate and 5-amino-6-(D-ribitylamino)uracil: step 1/2. Its function is as follows. Catalyzes the formation of 6,7-dimethyl-8-ribityllumazine by condensation of 5-amino-6-(D-ribitylamino)uracil with 3,4-dihydroxy-2-butanone 4-phosphate. This is the penultimate step in the biosynthesis of riboflavin. This chain is 6,7-dimethyl-8-ribityllumazine synthase, found in Thermoanaerobacter pseudethanolicus (strain ATCC 33223 / 39E) (Clostridium thermohydrosulfuricum).